The primary structure comprises 186 residues: CASP-like protein ARALYDRAFT_316979 (186 aa).

Over 1 to 23 (MRRNGDGEEVVAKRRRRIKELVQ) the chain is Cytoplasmic. The helical transmembrane segment at 24 to 44 (VALRGGCLAASATAMAVMLTA) threads the bilayer. The Extracellular portion of the chain corresponds to 45 to 70 (TEEGVADIYGFKLTLSSNWSFSPSYQ). An N-linked (GlcNAc...) asparagine glycan is attached at Asn62. Residues 71–91 (YVVGACTGTVLYSLFQLCLGV) traverse the membrane as a helical segment. Topologically, residues 92–115 (YRLLTGSPITPSRFQAWLCFTSDQ) are cytoplasmic. A helical transmembrane segment spans residues 116-132 (LFGYLMMSAGSAGSGVT). Residues 133 to 161 (NLNKTGIRHTPLPDFCKTLSSFCNHVALS) are Extracellular-facing. Asn135 is a glycosylation site (N-linked (GlcNAc...) asparagine). Residues 162–182 (LLLVFLSFIFLASSSFFTVLV) traverse the membrane as a helical segment. Residues 183-186 (LSTP) lie on the Cytoplasmic side of the membrane.

It belongs to the Casparian strip membrane proteins (CASP) family. In terms of assembly, homodimer and heterodimers.

It is found in the cell membrane. This is CASP-like protein ARALYDRAFT_316979 from Arabidopsis lyrata subsp. lyrata (Lyre-leaved rock-cress).